The following is a 72-amino-acid chain: Mitotic-spindle organizing protein 1 (72 aa).

The protein belongs to the MOZART1 family. In terms of assembly, part of the gamma-tubulin complex.

It is found in the cytoplasm. The protein localises to the cytoskeleton. Its subcellular location is the microtubule organizing center. The protein resides in the spindle pole body. In terms of biological role, required for gamma-tubulin complex recruitment to the microtubule organizing center (MTOC). The chain is Mitotic-spindle organizing protein 1 from Cryptococcus neoformans var. neoformans serotype D (strain B-3501A) (Filobasidiella neoformans).